Reading from the N-terminus, the 461-residue chain is L-seryl-tRNA(Sec) selenium transferase (461 aa).

The residue at position 291 (K291) is an N6-(pyridoxal phosphate)lysine.

The protein belongs to the SelA family. Pyridoxal 5'-phosphate serves as cofactor.

It is found in the cytoplasm. It catalyses the reaction L-seryl-tRNA(Sec) + selenophosphate + H(+) = L-selenocysteinyl-tRNA(Sec) + phosphate. It participates in aminoacyl-tRNA biosynthesis; selenocysteinyl-tRNA(Sec) biosynthesis; selenocysteinyl-tRNA(Sec) from L-seryl-tRNA(Sec) (bacterial route): step 1/1. Functionally, converts seryl-tRNA(Sec) to selenocysteinyl-tRNA(Sec) required for selenoprotein biosynthesis. The sequence is that of L-seryl-tRNA(Sec) selenium transferase from Caldanaerobacter subterraneus subsp. tengcongensis (strain DSM 15242 / JCM 11007 / NBRC 100824 / MB4) (Thermoanaerobacter tengcongensis).